Here is a 295-residue protein sequence, read N- to C-terminus: MEIRRRPPNPTVRVENLEYAVPHREAQAKNILEEIVWHKDIEIKNFKKIVSLEDLIKKIEKLPTPKDFYKNILESKIKPGVIAEIKKASPSKGVIRKDFNPENIAICYEGLGASCISVLTDKRFFQGSYEILETVRRSTNLPLLCKDFIISAYQIYKARVSGADAILLIAAILSDDDLIYLKKIADNLKMSVLVEVHNADELERILKLKSFNLIGINNRDLKTFKTDLKTSIELMHTYADIFLKQNIIPISESGINCAEDLESLRSIGIKGVLIGETFMRETDIEQSFKKLFTSI.

Belongs to the TrpC family.

It catalyses the reaction 1-(2-carboxyphenylamino)-1-deoxy-D-ribulose 5-phosphate + H(+) = (1S,2R)-1-C-(indol-3-yl)glycerol 3-phosphate + CO2 + H2O. Its pathway is amino-acid biosynthesis; L-tryptophan biosynthesis; L-tryptophan from chorismate: step 4/5. This chain is Indole-3-glycerol phosphate synthase, found in Prochlorococcus marinus (strain MIT 9301).